The following is a 376-amino-acid chain: MQPRDLSAHEPYVPGRGTKEVARELEVDPDSLIKLSSNENPHGPSPAAVDAIADTAETVNTYPKSSHTDLTARIADYWGLSPEQIWLSPGADGAIDYLSRAFLTPGDTMLISDPGFSYYPMSARYHHGSIRTYPVSKEQDFQQRASDILTQYDDERLLYVTTPHNPSGSELPIPEITALAEGVDDQTLIVIDEAYGEYSNNPSAIKLIQEYDNIAVLRTFSKAYGLAGLRIGYAAVPESWADAYARINTPFAANKTACQAALAAIEDQSHVEHSIETARWAREHYREELDARTWPSGGNFVLCEVGDGNAVAEAAKQEGVIIRDTTSFGLPECVRISCGTREQTKRAVDIISAVIEDVETATTTTESGVETEVGRP.

The disordered stretch occupies residues 1-21 (MQPRDLSAHEPYVPGRGTKEV). At lysine 222 the chain carries N6-(pyridoxal phosphate)lysine.

Belongs to the class-II pyridoxal-phosphate-dependent aminotransferase family. Histidinol-phosphate aminotransferase subfamily. Pyridoxal 5'-phosphate is required as a cofactor.

It catalyses the reaction L-histidinol phosphate + 2-oxoglutarate = 3-(imidazol-4-yl)-2-oxopropyl phosphate + L-glutamate. Its pathway is amino-acid biosynthesis; L-histidine biosynthesis; L-histidine from 5-phospho-alpha-D-ribose 1-diphosphate: step 7/9. In Haloquadratum walsbyi (strain DSM 16790 / HBSQ001), this protein is Histidinol-phosphate aminotransferase.